Consider the following 141-residue polypeptide: Large ribosomal subunit protein uL16 (141 aa).

This sequence belongs to the universal ribosomal protein uL16 family. In terms of assembly, part of the 50S ribosomal subunit.

In terms of biological role, binds 23S rRNA and is also seen to make contacts with the A and possibly P site tRNAs. This chain is Large ribosomal subunit protein uL16, found in Campylobacter fetus subsp. fetus (strain 82-40).